We begin with the raw amino-acid sequence, 216 residues long: Small ribosomal subunit protein uS3c (216 aa).

Residues 43–118 (IKNYIQKNIR…KLNIAIVKIT (76 aa)) form the KH type-2 domain.

Belongs to the universal ribosomal protein uS3 family. In terms of assembly, part of the 30S ribosomal subunit.

Its subcellular location is the plastid. The protein resides in the chloroplast. The sequence is that of Small ribosomal subunit protein uS3c (rps3) from Phaseolus vulgaris (Kidney bean).